Reading from the N-terminus, the 563-residue chain is MSEELVPHPNESLPGPRASPREVWKKGGRLLSVLLAVNVLLLACTLISGGAFNKVAVYDTDVFALLTTMMLLAALWIVFYLLRTARCPDAVPYRDAHAGPIWLRGGLVLFGICTLVMDVFKTGYYSSFFECQSAIKILHPIIQAVFVIVQTYFLWISAKDCIHTHLDLTRCGLMFTLATNLAIWMAAVVDESVHQAHSYSGSHGNTSHTRLNPDSKRAGGAAEEDPCLCSTAICQIFQQGYFYLYPFNIEYSLFASTMLYVMWKNVGRLLASTHGHGHTPSRVSLFRETFFAGPVLGLLLFVVGLAVFILYEVQVSGERGHTRQALVIYYSFNIVCLGLMTLVSLSGSVIYRFDRRAMDHHKNPTRTLDVALLMGAALGQYAISYYSIVAVVVGSPRDLQGALNLSHALLMIAQHTFQNVFIIESLHRGPPGAEPREMPPKEPCQGITFANLDAIRTLPSCPPTPRLVIPNLESPQEAVAIISAPRCHWRRRCLKDISLFLLLCNVILWIMPAFGARPHFSNTVEVDFYGYSLWAAIVNICLPFGIFYRMHAVSSLLEVYVLS.

The tract at residues 1 to 20 (MSEELVPHPNESLPGPRASP) is disordered. Helical transmembrane passes span 30–50 (LLSV…ISGG), 62–82 (VFAL…FYLL), 100–120 (PIWL…MDVF), 137–157 (ILHP…LWIS), 173–193 (LMFT…DESV), 242–262 (FYLY…LYVM), 290–310 (FFAG…VFIL), 325–345 (ALVI…LVSL), 373–393 (LMGA…AVVV), 403–423 (LNLS…VFII), 496–516 (DISL…AFGA), and 528–548 (FYGY…GIFY).

Belongs to the otopetrin family. Expressed at higher level in stomach, testis and olfactory bulb.

The protein localises to the cell membrane. It carries out the reaction H(+)(in) = H(+)(out). Actives at neutral and alkaline extracellular pH, acid extracellular pH appears to inhibit the channel. Insensitive to activation by Zn(2+). Functionally, proton-selective ion channel open at neutral pH. Actives at neutral and alkaline extracellular pH, likely participates in some alkali-related physiological activities. The polypeptide is Proton channel OTOP2 (Mus musculus (Mouse)).